The sequence spans 235 residues: Small ribosomal subunit protein eS6 (235 aa).

Phosphoserine occurs at positions 229 and 230.

It belongs to the eukaryotic ribosomal protein eS6 family. In terms of processing, phosphorylated.

The polypeptide is Small ribosomal subunit protein eS6 (RPS6) (Kluyveromyces marxianus (Yeast)).